A 146-amino-acid chain; its full sequence is Cystatin-C (146 aa).

Positions 1 to 26 are cleaved as a signal peptide; the sequence is MAGPLRAPLLLLAILAVALALSPAAG. Residue Ser-43 is modified to Phosphoserine. The Secondary area of contact motif lies at 81-85; the sequence is QIVAG. 2 disulfides stabilise this stretch: Cys-99/Cys-109 and Cys-123/Cys-143.

This sequence belongs to the cystatin family.

Its subcellular location is the secreted. Functionally, as an inhibitor of cysteine proteinases, this protein is thought to serve an important physiological role as a local regulator of this enzyme activity. The protein is Cystatin-C (CST3) of Saimiri sciureus (Common squirrel monkey).